A 124-amino-acid chain; its full sequence is Small ribosomal subunit protein uS12 (124 aa).

A 3-methylthioaspartic acid modification is found at Asp-89. The tract at residues 103–124 (DTAGVQKRRQGRSKYGAKRPKS) is disordered. Over residues 108 to 124 (QKRRQGRSKYGAKRPKS) the composition is skewed to basic residues.

Belongs to the universal ribosomal protein uS12 family. As to quaternary structure, part of the 30S ribosomal subunit. Contacts proteins S8 and S17. May interact with IF1 in the 30S initiation complex.

Its function is as follows. With S4 and S5 plays an important role in translational accuracy. Functionally, interacts with and stabilizes bases of the 16S rRNA that are involved in tRNA selection in the A site and with the mRNA backbone. Located at the interface of the 30S and 50S subunits, it traverses the body of the 30S subunit contacting proteins on the other side and probably holding the rRNA structure together. The combined cluster of proteins S8, S12 and S17 appears to hold together the shoulder and platform of the 30S subunit. In Methylococcus capsulatus (strain ATCC 33009 / NCIMB 11132 / Bath), this protein is Small ribosomal subunit protein uS12.